A 746-amino-acid chain; its full sequence is Probable ubiquitin carboxyl-terminal hydrolase MINDY-4 (746 aa).

Disordered regions lie at residues 123 to 179 (DDET…SEGE), 198 to 254 (MALG…IKGE), and 319 to 342 (GKGA…FSNM). Composition is skewed to polar residues over residues 141–152 (YRSQNDLQFNKS) and 165–174 (TEAGVTSTGV). Residue C448 is the Nucleophile of the active site. The Proton acceptor role is filled by H666.

Belongs to the MINDY deubiquitinase family. FAM188 subfamily.

It carries out the reaction Thiol-dependent hydrolysis of ester, thioester, amide, peptide and isopeptide bonds formed by the C-terminal Gly of ubiquitin (a 76-residue protein attached to proteins as an intracellular targeting signal).. Its function is as follows. Probable hydrolase that can remove 'Lys-48'-linked conjugated ubiquitin from proteins. This is Probable ubiquitin carboxyl-terminal hydrolase MINDY-4 (mindy4) from Xenopus tropicalis (Western clawed frog).